The sequence spans 425 residues: AP-3 complex subunit mu (425 aa).

The MHD domain occupies 175-423 (TNEFFIHVLE…TIIAQNVSFR (249 aa)).

The protein belongs to the adaptor complexes medium subunit family.

It is found in the cytoplasm. Its subcellular location is the cytoskeleton. It localises to the microtubule organizing center. The protein localises to the spindle pole body. The protein resides in the membrane. It is found in the golgi apparatus. Its subcellular location is the cytoplasmic vesicle membrane. Part of the AP-3 complex, an adaptor-related complex which is not clathrin-associated. The complex is associated with the Golgi region as well as more peripheral structures. It facilitates the budding of vesicles from the Golgi membrane and may be directly involved in trafficking to the vacuole. The chain is AP-3 complex subunit mu (apm3) from Schizosaccharomyces pombe (strain 972 / ATCC 24843) (Fission yeast).